A 1502-amino-acid chain; its full sequence is MSESAKAAAQNGQAEEQQLQQQLDEQQQLEEQQQLPPVTIRIPSPTCSRTVPKPKDSTEPLDRITLYPQPQETIQDIKLLINDWVGAYWLGPYSLQLPFVKGEDGRGKIYSKKKDFSEVRAGEKLNEWLEVQDAFEHLQEGEERVLEAVREPYGELSARQSIIRLLELIAPSGTTANTTSNPLGLQAGSTIFEQVRDGLVSANAETTYEEVEVSLPSGRKGKGGKKELVKVKRSVSGDKAHAFADWKGWAPASFGSLAVSSDPVEVAPSLKSIQISHFNPPPPHLRQKGHELYLQVSLLEGEVVTLICSTRGWYVSKSNVNNFDPSPRPSADGSIPAPTHSLIDLLHSISPLFSERVSRLPPISLDGALADPISTVAIPQATPAYPFLTSPPKPAISPEILRTQLAFLHTGAYGPDLVDAARDWNEEIQGIRELPRGTMQERVFREKMLQKVWAEFDQAAARAVQAVSKGDIPPINPAEDPKAHMYLQSNIFITQGDSDALDTYAHLGGDAAMRISHGKDAAGVKLLNKIDADGLYLLGHTIVDWQGRRWICQSILPGIFSNRRAVEEEKAQAETEAEAETADAVEGEQKKEDWVDVEKPTEKSGSETESDNPMMIYGLDSERPTSVHWDAATHSLLSTIATPLRLAAHTIKDGEGKEHEFYASAEVKGLKGQDGRRYLLDAQRLAPVDVEWLEKDITGPLVGPKKDDESAEEGVQYPHRLVMLRPELIEQFWESELKRWARGVAEKAQAKKAEAEAEAAAAADAEGEKKKEGEQSEIPQEEQSAAASAAAARRAEEDRPVDASLIGDIKQFNLSFNPDAFVEQPVLEAEGQEGKTEIKAAITDESDPSVKAVRDAGLFLRQIAIPAVVLDVLTGNTSGVMDGESLSKHLHQRGVNIRYLGHLASTIIQFSTSKDGAAKEPSGHLAALQSIVLQEMVFRAAKHILRELLYPLQPETATDAVSHFLNCLLGSCLNPAPVASYTPIGINSNEPEPAYVKLTPECLRAQIIKEVKSRFRWTLDESFLESGLRKKQLLRELASRVGFQLAQREYVFSKDQEEEENKREENIKSKEKKKGSKAGAKGETVKRTTTFEGEDVLTLVPVIKSTAPSVSVAEEILEAGRNTINRGKIEFGLDFMLEAIQLYESIHSVIHPEVASVYNSYAQAIHQIARLKIQQIAAQENPDPEQPLGVDISGALRFQRQAVAIAERTLGVYHHETAGYYFQLAMLENLEGNAQQSLRYFRHLLTLWDVIYGPGHPEISTILSNAGIVLQSMNDLSLSLSLQKQAYESTLACFGPNHIQTGQSLHQLVQGHFLAGDMASALETAKQALEIFKARLGEEHNQTKEEAKNVELLTAVIENQERQKEREEAVKKEATERLKMARERIGGGAASTSRPTGIRRLGGAGAGALPQGVRVVDPQTLAALAAAAGQGGNPSANAAAATAGQGEQANGESTGTPQIGERGTESLEELVRYIQGSAPGVGGSAKRGKNALRGKRRTGAKR.

Disordered regions lie at residues 1–62 (MSES…EPLD), 571–615 (AQAE…NPMM), 755–799 (AEAE…EEDR), 1054–1085 (KDQE…GETV), 1381–1403 (ARER…RLGG), and 1429–1502 (GQGG…GAKR). Over residues 7 to 35 (AAAQNGQAEEQQLQQQLDEQQQLEEQQQL) the composition is skewed to low complexity. Over residues 53-62 (KPKDSTEPLD) the composition is skewed to basic and acidic residues. A Clu domain is found at 399 to 693 (EILRTQLAFL…RLAPVDVEWL (295 aa)). The segment covering 575-586 (TEAEAETADAVE) has biased composition (acidic residues). Residues 587–606 (GEQKKEDWVDVEKPTEKSGS) show a composition bias toward basic and acidic residues. Low complexity predominate over residues 781–792 (EEQSAAASAAAA). Residues 1054-1069 (KDQEEEENKREENIKS) show a composition bias toward basic and acidic residues. The segment covering 1429-1451 (GQGGNPSANAAAATAGQGEQANG) has biased composition (low complexity). A compositionally biased stretch (basic and acidic residues) spans 1462-1471 (RGTESLEELV). Residues 1486-1502 (KRGKNALRGKRRTGAKR) are compositionally biased toward basic residues.

This sequence belongs to the CLU family. In terms of assembly, may associate with the eukaryotic translation initiation factor 3 (eIF-3) complex.

The protein resides in the cytoplasm. Functionally, mRNA-binding protein involved in proper cytoplasmic distribution of mitochondria. The sequence is that of Clustered mitochondria protein homolog from Cryptococcus neoformans var. neoformans serotype D (strain B-3501A) (Filobasidiella neoformans).